A 1475-amino-acid chain; its full sequence is Amylopullulanase (1475 aa).

An N-terminal signal peptide occupies residues 1-31 (MFKRRALGFLLAFLLVFTAVFGSMPMEFAKA). 10 residues coordinate Ca(2+): D245, N247, D285, D340, N398, D400, N403, D404, G449, and D451. Residues H524 and R627 each coordinate substrate. D629 serves as the catalytic Nucleophile. The active-site Proton donor is E658. Residues 734–735 (HD), D794, and R798 each bind substrate. 2 consecutive Fibronectin type-III domains span residues 928–1019 (APQP…PAFP) and 1164–1257 (TPTA…TPDI). Residues 1255-1362 (PDIIPIKVTF…VNDTVQRWRD (108 aa)) enclose the CBM20 domain.

It belongs to the glycosyl hydrolase 13 family. Ca(2+) is required as a cofactor.

The enzyme catalyses Endohydrolysis of (1-&gt;4)-alpha-D-glucosidic linkages in polysaccharides containing three or more (1-&gt;4)-alpha-linked D-glucose units.. It catalyses the reaction Hydrolysis of (1-&gt;6)-alpha-D-glucosidic linkages in pullulan, amylopectin and glycogen, and in the alpha- and beta-limit dextrins of amylopectin and glycogen.. This Thermoanaerobacter thermohydrosulfuricus (Clostridium thermohydrosulfuricum) protein is Amylopullulanase (apu).